A 436-amino-acid polypeptide reads, in one-letter code: CaM kinase-like vesicle-associated protein (436 aa).

Residues 24 to 286 (YDLGQIVKSE…AQEAINHEWI (263 aa)) form the Protein kinase domain. The disordered stretch occupies residues 328-436 (APENQTAAAT…ALDTVEEQSG (109 aa)). Residues 333 to 409 (TAAATAPAAE…QPPAEPVVHV (77 aa)) are compositionally biased toward low complexity.

It belongs to the protein kinase superfamily. CAMK Ser/Thr protein kinase family. In terms of assembly, interacts with calmodulin, in the presence of calcium. The cofactor is Ca(2+).

It is found in the cytoplasmic vesicle membrane. Does not appear to have detectable kinase activity. This is CaM kinase-like vesicle-associated protein (camkv) from Danio rerio (Zebrafish).